Here is an 804-residue protein sequence, read N- to C-terminus: G-type lectin S-receptor-like serine/threonine-protein kinase At1g61490 (804 aa).

Residues 1–24 form the signal peptide; the sequence is MGKKRIVFFACLLLFTVLLRFSYA. A Bulb-type lectin domain is found at 25-144; that stretch reads GITTESPLSV…ASGRTLWESF (120 aa). The Extracellular portion of the chain corresponds to 25-425; that stretch reads GITTESPLSV…SELGGNKRNK (401 aa). Asparagine 53, asparagine 94, asparagine 117, asparagine 134, asparagine 236, and asparagine 267 each carry an N-linked (GlcNAc...) asparagine glycan. One can recognise an EGF-like domain in the interval 278-314; the sequence is PANSCDIYGVCGPFGLCIVSVPLKCKCLKGFVPHSTE. 2 disulfide bridges follow: cysteine 282-cysteine 294 and cysteine 288-cysteine 302. 3 N-linked (GlcNAc...) asparagine glycosylation sites follow: asparagine 320, asparagine 336, and asparagine 375. Residues 333–415 form the PAN domain; the sequence is CQGNSTGKDV…GEILSIRLAH (83 aa). Disulfide bonds link cysteine 368/cysteine 389 and cysteine 372/cysteine 378. A helical membrane pass occupies residues 426-446; it reads IIVASTVSLSLFVILTSAAFG. Topologically, residues 447–804 are cytoplasmic; it reads FWRYRVKHKA…EMTQSMILGR (358 aa). The Protein kinase domain occupies 490–775; it reads FSLSNKLGQG…DLPSPKQPTF (286 aa). ATP contacts are provided by residues 496 to 504 and lysine 518; that span reads LGQGGFGSV. Phosphoserine is present on residues serine 524 and serine 539. The tract at residues 579 to 596 is caM-binding; that stretch reads RKKLEVDWPKRFDIVQGI. Aspartate 615 serves as the catalytic Proton acceptor. Residues serine 619 and serine 632 each carry the phosphoserine modification. The residue at position 649 (threonine 649) is a Phosphothreonine. Serine 692 bears the Phosphoserine mark.

The protein belongs to the protein kinase superfamily. Ser/Thr protein kinase family.

The protein localises to the cell membrane. The catalysed reaction is L-seryl-[protein] + ATP = O-phospho-L-seryl-[protein] + ADP + H(+). It carries out the reaction L-threonyl-[protein] + ATP = O-phospho-L-threonyl-[protein] + ADP + H(+). In Arabidopsis thaliana (Mouse-ear cress), this protein is G-type lectin S-receptor-like serine/threonine-protein kinase At1g61490.